The primary structure comprises 505 residues: Glycerol kinase (505 aa).

ADP is bound at residue Thr-15. The ATP site is built by Thr-15, Thr-16, and Ser-17. Residue Thr-15 coordinates sn-glycerol 3-phosphate. ADP is bound at residue Arg-19. Sn-glycerol 3-phosphate contacts are provided by Arg-85, Glu-86, Tyr-136, and Asp-249. Residues Arg-85, Glu-86, Tyr-136, Asp-249, and Gln-250 each contribute to the glycerol site. Thr-271 and Gly-314 together coordinate ADP. ATP is bound by residues Thr-271, Gly-314, Gln-318, and Gly-415. Positions 415 and 419 each coordinate ADP.

Belongs to the FGGY kinase family.

The enzyme catalyses glycerol + ATP = sn-glycerol 3-phosphate + ADP + H(+). Its pathway is polyol metabolism; glycerol degradation via glycerol kinase pathway; sn-glycerol 3-phosphate from glycerol: step 1/1. Its activity is regulated as follows. Inhibited by fructose 1,6-bisphosphate (FBP). Functionally, key enzyme in the regulation of glycerol uptake and metabolism. Catalyzes the phosphorylation of glycerol to yield sn-glycerol 3-phosphate. This is Glycerol kinase from Mycoplasma mycoides subsp. mycoides SC (strain CCUG 32753 / NCTC 10114 / PG1).